Reading from the N-terminus, the 1722-residue chain is Signal-induced proliferation-associated 1-like protein 2 (1722 aa).

Disordered stretches follow at residues 1–29 (MSDPRPSQAEKHKLGRAAAKLKDPSRTMQ) and 44–72 (SMGPATLNTSSSSEGGGGGGGPANGTPAV). The segment covering 57–66 (EGGGGGGGPA) has biased composition (gly residues). A phosphoserine mark is found at S149, S380, and S384. The interval 362–405 (ASAASQTPVPVGPAGGCESPLGSKEDLNSKENPDADEGDGKSND) is disordered. A compositionally biased stretch (basic and acidic residues) spans 384–403 (SKEDLNSKENPDADEGDGKS). In terms of domain architecture, Rap-GAP spans 596–813 (LLKLDEQGLS…RTRQEYLKDL (218 aa)). A PDZ domain is found at 951 to 1027 (EMTLRRNGLG…VKVVIIQPHE (77 aa)). The residue at position 1030 (S1030) is a Phosphoserine. Disordered stretches follow at residues 1068-1246 (HRVP…FGSG) and 1331-1360 (GSMGDLSEVSSHSSGSQHSGSPSAHCSKST). 2 stretches are compositionally biased toward low complexity: residues 1091–1103 (LQCQPLLQQAQAA) and 1120–1131 (SSPSNQSSSSDP). The segment covering 1195-1218 (YKERVLQKDGSCKESPNKLSHIGD) has biased composition (basic and acidic residues). Over residues 1220–1237 (SCSSHSSSNTLSSNTSSN) the composition is skewed to low complexity. Position 1245 is a phosphoserine (S1245). Over residues 1331-1355 (GSMGDLSEVSSHSSGSQHSGSPSAH) the composition is skewed to low complexity. Phosphoserine occurs at positions 1461, 1472, 1478, 1488, 1549, 1552, and 1591. The stretch at 1652 to 1712 (STLTGKVNQL…ATAQLRKFTE (61 aa)) forms a coiled coil.

This is Signal-induced proliferation-associated 1-like protein 2 (Sipa1l2) from Mus musculus (Mouse).